Reading from the N-terminus, the 130-residue chain is Phosphoribosyl-AMP cyclohydrolase (130 aa).

Asp-77 lines the Mg(2+) pocket. Residue Cys-78 coordinates Zn(2+). Residues Asp-79 and Asp-81 each coordinate Mg(2+). Positions 95 and 102 each coordinate Zn(2+).

Belongs to the PRA-CH family. As to quaternary structure, homodimer. It depends on Mg(2+) as a cofactor. Zn(2+) serves as cofactor.

It localises to the cytoplasm. It carries out the reaction 1-(5-phospho-beta-D-ribosyl)-5'-AMP + H2O = 1-(5-phospho-beta-D-ribosyl)-5-[(5-phospho-beta-D-ribosylamino)methylideneamino]imidazole-4-carboxamide. The protein operates within amino-acid biosynthesis; L-histidine biosynthesis; L-histidine from 5-phospho-alpha-D-ribose 1-diphosphate: step 3/9. Its function is as follows. Catalyzes the hydrolysis of the adenine ring of phosphoribosyl-AMP. The protein is Phosphoribosyl-AMP cyclohydrolase of Pseudomonas putida (strain GB-1).